The following is a 208-amino-acid chain: Probable transcriptional regulator ycf29 (208 aa).

In terms of domain architecture, Response regulatory spans 11 to 118 (KLILIEPEEH…ELIAIISNLI (108 aa)). A 4-aspartylphosphate modification is found at Asp-60. Residues 146-208 (TSFSYINLTV…NRIQILSYFN (63 aa)) enclose the HTH luxR-type domain.

It localises to the plastid. The protein resides in the chloroplast. This Guillardia theta (Cryptophyte) protein is Probable transcriptional regulator ycf29 (ycf29).